A 674-amino-acid chain; its full sequence is Linear primary-alkylsulfatase (674 aa).

The signal sequence occupies residues 1–41; sequence MKLNALSTATHGSRSSPVKLWKFSTSFLLAASIIVSGQSWA. The Zn(2+) site is built by histidine 192, histidine 194, aspartate 196, histidine 197, glutamate 303, and glutamate 322. Residues 330–335 and arginine 340 each bind sulfate; that span reads NTYSLR. Histidine 367 is a Zn(2+) binding site. Tyrosine 428 contacts sulfate.

This sequence belongs to the metallo-beta-lactamase superfamily. Type III sulfatase family. In terms of assembly, homodimer. The cofactor is Zn(2+).

Its subcellular location is the periplasm. The catalysed reaction is a primary linear alkyl sulfate ester + H2O = a primary alcohol + sulfate + H(+). Inhibited by EDTA. Slightly activated in the presence of Ca(2+). Alkylsulfatase that cleaves primary alkyl sulfates such as sodium octyl sulfate and the widely used detergent sodium dodecyl sulfate (SDS). The polypeptide is Linear primary-alkylsulfatase (Pseudomonas sp).